Reading from the N-terminus, the 153-residue chain is Troponin C (153 aa).

EF-hand domains lie at 9 to 44 (EQVQ…LGQT), 45 to 80 (FEEN…FLVE), 85 to 120 (AMQE…LDDK), and 121 to 153 (LTED…MTGD). Residues Asp58, Asp60, Ser62, Glu64, and Glu69 each coordinate Ca(2+). Ca(2+) contacts are provided by Asp134, Asp136, Ser138, Thr140, and Glu145.

The protein belongs to the troponin C family.

In terms of biological role, troponin is the central regulatory protein of striated muscle contraction. Tn consists of three components: Tn-I which is the inhibitor of actomyosin ATPase, Tn-T which contains the binding site for tropomyosin and Tn-C. The binding of calcium to Tn-C abolishes the inhibitory action of Tn on actin filaments. The protein is Troponin C of Tyrophagus putrescentiae (Mold mite).